The sequence spans 761 residues: Neurotrypsin (761 aa).

The N-terminal stretch at 1–21 is a signal peptide; sequence MALARCVLAVILGVLSEVARA. Residues 26–88 form a disordered region; the sequence is HSPLHRPHPS…PTISRRCGAG (63 aa). Positions 54 to 63 are enriched in pro residues; that stretch reads TPRFPLPPRA. In terms of domain architecture, Kringle spans 85-157; the sequence is CGAGEPWGNA…GKVDWGYCDC (73 aa). Intrachain disulfides connect C85-C157, C101-C141, C130-C155, C191-C255, C204-C265, C235-C245, C298-C361, C311-C371, C341-C351, C411-C475, C424-C485, C455-C465, C505-C636, C547-C563, C651-C717, C680-C694, and C707-C736. A glycan (N-linked (GlcNAc...) asparagine) is linked at N93. 3 SRCR domains span residues 166–267, 273–373, and 386–487; these read IRLV…SCAP, IRLS…TCYP, and IRLM…ICDY. The zymogen activation region stretch occupies residues 505-516; that stretch reads CGLRLLHRRQKR. The region spanning 517-760 is the Peptidase S1 domain; that stretch reads IIGGNNSLRG…FVPWIKSVTS (244 aa). N521 is a glycosylation site (N-linked (GlcNAc...) asparagine). H562 functions as the Charge relay system in the catalytic mechanism. N569 carries an N-linked (GlcNAc...) asparagine glycan. D612 (charge relay system) is an active-site residue. Residue S711 is the Charge relay system of the active site.

This sequence belongs to the peptidase S1 family.

It localises to the secreted. Functionally, plays a role in neuronal plasticity and the proteolytic action may subserve structural reorganizations associated with learning and memory operations. The polypeptide is Neurotrypsin (Prss12) (Rattus norvegicus (Rat)).